A 97-amino-acid chain; its full sequence is Probable lipopolysaccharide assembly protein A (97 aa).

The next 2 helical transmembrane spans lie at Met1 to Ile21 and Val46 to Ile66. A coiled-coil region spans residues Lys67 to Lys95.

The protein belongs to the LapA family.

Its subcellular location is the cell inner membrane. In terms of biological role, involved in the assembly of lipopolysaccharide (LPS). In Haemophilus influenzae (strain ATCC 51907 / DSM 11121 / KW20 / Rd), this protein is Probable lipopolysaccharide assembly protein A.